We begin with the raw amino-acid sequence, 397 residues long: Arginine biosynthesis bifunctional protein ArgJ (397 aa).

Positions 147, 173, 184, 270, 392, and 397 each coordinate substrate. T184 acts as the Nucleophile in catalysis.

This sequence belongs to the ArgJ family. Heterotetramer of two alpha and two beta chains.

Its subcellular location is the cytoplasm. It carries out the reaction N(2)-acetyl-L-ornithine + L-glutamate = N-acetyl-L-glutamate + L-ornithine. The enzyme catalyses L-glutamate + acetyl-CoA = N-acetyl-L-glutamate + CoA + H(+). It participates in amino-acid biosynthesis; L-arginine biosynthesis; L-ornithine and N-acetyl-L-glutamate from L-glutamate and N(2)-acetyl-L-ornithine (cyclic): step 1/1. The protein operates within amino-acid biosynthesis; L-arginine biosynthesis; N(2)-acetyl-L-ornithine from L-glutamate: step 1/4. Its function is as follows. Catalyzes two activities which are involved in the cyclic version of arginine biosynthesis: the synthesis of N-acetylglutamate from glutamate and acetyl-CoA as the acetyl donor, and of ornithine by transacetylation between N(2)-acetylornithine and glutamate. In Staphylococcus epidermidis (strain ATCC 35984 / DSM 28319 / BCRC 17069 / CCUG 31568 / BM 3577 / RP62A), this protein is Arginine biosynthesis bifunctional protein ArgJ.